We begin with the raw amino-acid sequence, 95 residues long: Protein translocase subunit SecE (95 aa).

The segment at 1–35 (MTDAVGSIDMPDAEDEAPESKKKSRKGGKRGKKGP) is disordered. Over residues 22-35 (KKSRKGGKRGKKGP) the composition is skewed to basic residues. A helical membrane pass occupies residues 67 to 87 (VVIVFVVVMIGLVTVLDIGFA).

This sequence belongs to the SecE/SEC61-gamma family. As to quaternary structure, component of the Sec protein translocase complex. Heterotrimer consisting of SecY, SecE and SecG subunits. The heterotrimers can form oligomers, although 1 heterotrimer is thought to be able to translocate proteins. Interacts with the ribosome. Interacts with SecDF, and other proteins may be involved. Interacts with SecA.

It is found in the cell membrane. Functionally, essential subunit of the Sec protein translocation channel SecYEG. Clamps together the 2 halves of SecY. May contact the channel plug during translocation. In Streptomyces griseus, this protein is Protein translocase subunit SecE.